Here is a 235-residue protein sequence, read N- to C-terminus: Aspartate/glutamate leucyltransferase (235 aa).

It belongs to the R-transferase family. Bpt subfamily.

The protein resides in the cytoplasm. It carries out the reaction N-terminal L-glutamyl-[protein] + L-leucyl-tRNA(Leu) = N-terminal L-leucyl-L-glutamyl-[protein] + tRNA(Leu) + H(+). The catalysed reaction is N-terminal L-aspartyl-[protein] + L-leucyl-tRNA(Leu) = N-terminal L-leucyl-L-aspartyl-[protein] + tRNA(Leu) + H(+). Functions in the N-end rule pathway of protein degradation where it conjugates Leu from its aminoacyl-tRNA to the N-termini of proteins containing an N-terminal aspartate or glutamate. The protein is Aspartate/glutamate leucyltransferase of Pseudomonas putida (strain W619).